The following is a 762-amino-acid chain: Cellulose synthase-like protein H2 (762 aa).

Over residues 1 to 15 (MAVVAAAAATGSTTR) the composition is skewed to low complexity. A disordered region spans residues 1–39 (MAVVAAAAATGSTTRSGGGGGEGTRSGRKKPPPPPLQER). The next 2 membrane-spanning stretches (helical) occupy residues 47–67 (AWAWRLAGLAVLLLLLALLAL) and 81–101 (GVWRVALVCEAWFAALCALNV). Active-site residues include Asp180 and Asp470. 6 helical membrane passes run 541 to 561 (LAYLIVLGWPLRAPFELCYGL), 582 to 602 (FSVPLALFISYNTYNFMEYMA), 619 to 639 (IISVSAWTLAFLTVLLKSLGL), 673 to 693 (LPVFIPVTALAMLNIVAVTVG), 708 to 728 (APGIGEFMCCGWLVLCFFPFV), and 739 to 759 (GIPWSVKLKASLLVAMFVTFC).

This sequence belongs to the glycosyltransferase 2 family. Plant cellulose synthase-like H subfamily.

The protein resides in the golgi apparatus membrane. Its function is as follows. Thought to be a Golgi-localized beta-glycan synthase that polymerize the backbones of noncellulosic polysaccharides (hemicelluloses) of plant cell wall. The sequence is that of Cellulose synthase-like protein H2 (CSLH2) from Oryza sativa subsp. indica (Rice).